Reading from the N-terminus, the 329-residue chain is uncharacterized protein (329 aa).

Residues 1 to 20 (MGESTTQPAGGAAVDDETRS) form a disordered region.

This is an uncharacterized protein from Mycobacterium tuberculosis (strain CDC 1551 / Oshkosh).